Here is a 490-residue protein sequence, read N- to C-terminus: Phenylacetaldehyde synthase (490 aa).

Pro92, His193, and His308 together coordinate L-phenylalanine. Lys309 is modified (N6-(pyridoxal phosphate)lysine). Residue Phe338 participates in L-phenylalanine binding.

The protein belongs to the group II decarboxylase family. As to quaternary structure, homodimer. Pyridoxal 5'-phosphate is required as a cofactor. As to expression, expressed in roots, rosette leaves, stems, cauline leaves and flowers.

The catalysed reaction is L-phenylalanine + O2 + H2O + H(+) = 2-phenylacetaldehyde + H2O2 + NH4(+) + CO2. It carries out the reaction L-dopa + O2 + H2O + H(+) = 3,4-dihydroxyphenylacetaldehyde + H2O2 + NH4(+) + CO2. Its function is as follows. Bifunctional enzyme that catalyzes the decarboxylation of L-phenylalanine to 2-phenylethylamine, which is then oxidized to form 2-phenylacetaldehyde, a constituent of floral scent. 2-phenylacetaldehyde is a precursor of 2-phenylethanol, another constituent of floral scent. Catalyzes both the decarboxylation and deamination of L-dopa to 3,4-dihydroxylphenylacetaldehyde (DHPAA). This Arabidopsis thaliana (Mouse-ear cress) protein is Phenylacetaldehyde synthase.